A 403-amino-acid chain; its full sequence is Argininosuccinate synthase (403 aa).

ATP contacts are provided by residues 10–18 (AYSGGLDTS) and Ala-37. Tyr-89 contacts L-citrulline. Gly-119 is an ATP binding site. L-aspartate contacts are provided by Thr-121, Asn-125, and Asp-126. An L-citrulline-binding site is contributed by Asn-125. L-citrulline is bound by residues Arg-129, Ser-178, Ser-187, Glu-263, and Tyr-275.

The protein belongs to the argininosuccinate synthase family. Type 1 subfamily. Homotetramer.

It localises to the cytoplasm. It catalyses the reaction L-citrulline + L-aspartate + ATP = 2-(N(omega)-L-arginino)succinate + AMP + diphosphate + H(+). The protein operates within amino-acid biosynthesis; L-arginine biosynthesis; L-arginine from L-ornithine and carbamoyl phosphate: step 2/3. This is Argininosuccinate synthase from Idiomarina loihiensis (strain ATCC BAA-735 / DSM 15497 / L2-TR).